A 476-amino-acid chain; its full sequence is Serine carboxypeptidase 2 (476 aa).

An N-terminal signal peptide occupies residues 1 to 34 (MRTTTRRLPPAPAAAAVLLAALTCLLLRPAAVAA). 3 cysteine pairs are disulfide-bonded: Cys-97/Cys-353, Cys-254/Cys-266, and Cys-290/Cys-320. Asn-148 and Asn-159 each carry an N-linked (GlcNAc...) asparagine glycan. Ser-190 is a catalytic residue. Residue Asn-291 is glycosylated (N-linked (GlcNAc...) asparagine). Residues 295-313 (SSSSSSLSRRRTRGRYPWL) constitute a propeptide, linker peptide. Thr-314 carries the blocked amino end (Thr) modification. N-linked (GlcNAc...) asparagine glycans are attached at residues Asn-341 and Asn-347. N-linked (GlcNAc...) asparagine; partial glycosylation occurs at Asn-352. Asn-352 is a glycosylation site (O-linked (GalNAc...) threonine; in variant 351-AT-352). Active-site residues include Asp-390 and His-443. An N-linked (GlcNAc...) asparagine glycan is attached at Asn-472.

The protein belongs to the peptidase S10 family. As to quaternary structure, carboxypeptidase II is a dimer, where each monomer is composed of two chains linked by a disulfide bond.

The protein resides in the secreted. It carries out the reaction Preferential release of a C-terminal arginine or lysine residue.. Its function is as follows. May be involved in the degradation of small peptides (2-5 residues) or in the degradation of storage proteins in the embryo. The chain is Serine carboxypeptidase 2 (CBP2) from Hordeum vulgare (Barley).